Here is an 856-residue protein sequence, read N- to C-terminus: Probable alpha,alpha-trehalose-phosphate synthase [UDP-forming] 8 (856 aa).

The residue at position 5 (serine 5) is a Phosphoserine. Threonine 32 bears the Phosphothreonine mark. A glycosyltransferase region spans residues 57–541 (ERKIIVANML…AKSFMQDLER (485 aa)).

The protein in the N-terminal section; belongs to the glycosyltransferase 20 family. It in the C-terminal section; belongs to the trehalose phosphatase family. Expressed in leaves, roots, stems and flowers.

The enzyme catalyses D-glucose 6-phosphate + UDP-alpha-D-glucose = alpha,alpha-trehalose 6-phosphate + UDP + H(+). The polypeptide is Probable alpha,alpha-trehalose-phosphate synthase [UDP-forming] 8 (TPS8) (Arabidopsis thaliana (Mouse-ear cress)).